The primary structure comprises 320 residues: Aristolochene synthase (320 aa).

A compositionally biased stretch (polar residues) spans 1–14 (MKKPNGTNGASSSL). Positions 1-20 (MKKPNGTNGASSSLEPPPST) are disordered. Mg(2+)-binding residues include Asp-90, Asn-219, Ser-223, and Glu-227. 2 residues coordinate (2E,6E)-farnesyl diphosphate: Arg-314 and Tyr-315.

This sequence belongs to the terpene synthase family. In terms of assembly, homodimer. Mg(2+) serves as cofactor.

The catalysed reaction is (2E,6E)-farnesyl diphosphate = (+)-aristolochene + diphosphate. It participates in sesquiterpene biosynthesis; aristolochene biosynthesis; aristolochene from farnesyl diphosphate: step 1/1. Catalyzes the cyclization of trans,trans-farnesyl diphosphate (FPP) to the bicyclic sesquiterpene aristolochene. Produces germacrene A as an enzyme-bound intermediate that is not released by the enzyme, but is further cyclized to produce aristolochene. Aristolochene is the likely parent compound for a number of sesquiterpenoid toxins produced by filamentous fungi. This Aspergillus terreus protein is Aristolochene synthase (Ari1).